A 140-amino-acid chain; its full sequence is Large ribosomal subunit protein uL11 (140 aa).

Belongs to the universal ribosomal protein uL11 family. As to quaternary structure, part of the ribosomal stalk of the 50S ribosomal subunit. Interacts with L10 and the large rRNA to form the base of the stalk. L10 forms an elongated spine to which L12 dimers bind in a sequential fashion forming a multimeric L10(L12)X complex. One or more lysine residues are methylated.

Its function is as follows. Forms part of the ribosomal stalk which helps the ribosome interact with GTP-bound translation factors. The chain is Large ribosomal subunit protein uL11 from Staphylococcus epidermidis (strain ATCC 35984 / DSM 28319 / BCRC 17069 / CCUG 31568 / BM 3577 / RP62A).